The primary structure comprises 89 residues: Small ribosomal subunit protein bS16 (89 aa).

This sequence belongs to the bacterial ribosomal protein bS16 family.

The chain is Small ribosomal subunit protein bS16 from Chloroflexus aggregans (strain MD-66 / DSM 9485).